The primary structure comprises 418 residues: Glutamyl-tRNA reductase (418 aa).

Residues 49–52 (TCNR), Ser-108, 113–115 (EPQ), and Gln-119 contribute to the substrate site. The Nucleophile role is filled by Cys-50. 188-193 (GAGETI) contacts NADP(+).

Belongs to the glutamyl-tRNA reductase family. Homodimer.

It catalyses the reaction (S)-4-amino-5-oxopentanoate + tRNA(Glu) + NADP(+) = L-glutamyl-tRNA(Glu) + NADPH + H(+). Its pathway is porphyrin-containing compound metabolism; protoporphyrin-IX biosynthesis; 5-aminolevulinate from L-glutamyl-tRNA(Glu): step 1/2. Functionally, catalyzes the NADPH-dependent reduction of glutamyl-tRNA(Glu) to glutamate 1-semialdehyde (GSA). In Aliivibrio fischeri (strain MJ11) (Vibrio fischeri), this protein is Glutamyl-tRNA reductase.